A 164-amino-acid polypeptide reads, in one-letter code: NADH-quinone oxidoreductase subunit I (164 aa).

4Fe-4S ferredoxin-type domains are found at residues 55–85 and 95–124; these read LRRYPNGEERCIACKLCEAICPAQAITIDAE and TRYDIDMTKCIYCGFCQEACPVDAIVEGPN. Residues cysteine 65, cysteine 68, cysteine 71, cysteine 75, cysteine 104, cysteine 107, cysteine 110, and cysteine 114 each contribute to the [4Fe-4S] cluster site.

The protein belongs to the complex I 23 kDa subunit family. As to quaternary structure, NDH-1 is composed of 14 different subunits. Subunits NuoA, H, J, K, L, M, N constitute the membrane sector of the complex. [4Fe-4S] cluster is required as a cofactor.

Its subcellular location is the cell inner membrane. It carries out the reaction a quinone + NADH + 5 H(+)(in) = a quinol + NAD(+) + 4 H(+)(out). Its function is as follows. NDH-1 shuttles electrons from NADH, via FMN and iron-sulfur (Fe-S) centers, to quinones in the respiratory chain. The immediate electron acceptor for the enzyme in this species is believed to be ubiquinone. Couples the redox reaction to proton translocation (for every two electrons transferred, four hydrogen ions are translocated across the cytoplasmic membrane), and thus conserves the redox energy in a proton gradient. The protein is NADH-quinone oxidoreductase subunit I of Ruegeria pomeroyi (strain ATCC 700808 / DSM 15171 / DSS-3) (Silicibacter pomeroyi).